Reading from the N-terminus, the 165-residue chain is Lipoprotein signal peptidase (165 aa).

The next 3 helical transmembrane spans lie at phenylalanine 9 to tyrosine 29, lysine 69 to leucine 89, and isoleucine 98 to phenylalanine 118. Active-site residues include aspartate 124 and aspartate 142. Residues tryptophan 133–valine 153 form a helical membrane-spanning segment.

This sequence belongs to the peptidase A8 family.

The protein resides in the cell inner membrane. The enzyme catalyses Release of signal peptides from bacterial membrane prolipoproteins. Hydrolyzes -Xaa-Yaa-Zaa-|-(S,diacylglyceryl)Cys-, in which Xaa is hydrophobic (preferably Leu), and Yaa (Ala or Ser) and Zaa (Gly or Ala) have small, neutral side chains.. It functions in the pathway protein modification; lipoprotein biosynthesis (signal peptide cleavage). This protein specifically catalyzes the removal of signal peptides from prolipoproteins. The sequence is that of Lipoprotein signal peptidase from Chlamydia caviae (strain ATCC VR-813 / DSM 19441 / 03DC25 / GPIC) (Chlamydophila caviae).